The chain runs to 450 residues: Transcription factor AP-2 gamma (450 aa).

A Glycyl lysine isopeptide (Lys-Gly) (interchain with G-Cter in SUMO) cross-link involves residue K10. Disordered stretches follow at residues 13-63 (EDCE…FPPP) and 90-126 (LHQPAPTGSQQQAWPGRQSQEGAGLPSHHGRPAGLLP). The PPxY motif motif lies at 59–64 (YFPPPY). The segment covering 95 to 110 (PTGSQQQAWPGRQSQE) has biased composition (polar residues). S252 is modified (phosphoserine; by PKA). The segment at 293 to 424 (RRKAAHVTLL…YIKEALIVID (132 aa)) is H-S-H (helix-span-helix), dimerization. The tract at residues 431 to 450 (GDQSPADSNKTLEKMEKHRK) is disordered. At S434 the chain carries Phosphoserine. The span at 440-450 (KTLEKMEKHRK) shows a compositional bias: basic and acidic residues.

Belongs to the AP-2 family. In terms of assembly, binds DNA as a dimer. Can form homodimers or heterodimers with other AP-2 family members. Interacts with WWOX. Interacts with UBE2I. Interacts with KCTD1; this interaction represses transcription activation. Interacts with CITED2 (via C-terminus); the interaction stimulates TFAP2B-transcriptional activity. Interacts with CITED4. Interacts with MTA1. Post-translationally, sumoylated on Lys-10; which inhibits transcriptional activity.

Its subcellular location is the nucleus. Functionally, sequence-specific DNA-binding transcription factor that interacts with cellular enhancer elements to regulate transcription of selected genes, and which plays a key role in early embryonic development. AP-2 factors bind to the consensus sequence 5'-GCCNNNGGC-3' and activate genes involved in a large spectrum of important biological functions. TFAP2C plays a key role in early embryonic development by regulating both inner cell mass (ICM) and trophectoderm differentiation. At the 8-cell stage, during morula development, controls expression of cell-polarity genes. Upon trophoblast commitment, binds to late trophectoderm genes in blastocysts together with CDX2, and later to extra-embryonic ectoderm genes together with SOX2. Binds to both closed and open chromatin with other transcription factors. Involved in the MTA1-mediated epigenetic regulation of ESR1 expression in breast cancer. This chain is Transcription factor AP-2 gamma (TFAP2C), found in Homo sapiens (Human).